The primary structure comprises 597 residues: Elongation factor 4 (597 aa).

The 183-residue stretch at 2-184 folds into the tr-type G domain; sequence DHIRNFSIIA…ALIAKVPPPK (183 aa). Residues 14-19 and 131-134 each bind GTP; these read DHGKST and NKID.

The protein belongs to the TRAFAC class translation factor GTPase superfamily. Classic translation factor GTPase family. LepA subfamily.

The protein localises to the cell inner membrane. The enzyme catalyses GTP + H2O = GDP + phosphate + H(+). In terms of biological role, required for accurate and efficient protein synthesis under certain stress conditions. May act as a fidelity factor of the translation reaction, by catalyzing a one-codon backward translocation of tRNAs on improperly translocated ribosomes. Back-translocation proceeds from a post-translocation (POST) complex to a pre-translocation (PRE) complex, thus giving elongation factor G a second chance to translocate the tRNAs correctly. Binds to ribosomes in a GTP-dependent manner. This is Elongation factor 4 from Paraburkholderia phymatum (strain DSM 17167 / CIP 108236 / LMG 21445 / STM815) (Burkholderia phymatum).